Reading from the N-terminus, the 181-residue chain is Thioredoxin-like protein CITRX1, chloroplastic (181 aa).

The segment at Met1–Cys20 is disordered. Residues Met1–Arg70 constitute a chloroplast transit peptide. The 111-residue stretch at Glu71 to Leu181 folds into the Thioredoxin domain. Active-site nucleophile residues include Cys104 and Cys107. Cys104 and Cys107 form a disulfide bridge.

It belongs to the thioredoxin family. Plant CITRX-type subfamily.

The protein localises to the plastid. It localises to the chloroplast. Probable thiol-disulfide oxidoreductase that may play a role in proper chloroplast development. The sequence is that of Thioredoxin-like protein CITRX1, chloroplastic from Nicotiana benthamiana.